The primary structure comprises 1232 residues: DNA-directed RNA polymerase subunit beta (1232 aa).

The disordered stretch occupies residues 1170–1232; that stretch reads SVDEDADELE…LDLDDFGDEH (63 aa). Residues 1171 to 1180 are compositionally biased toward acidic residues; sequence VDEDADELEV. The segment covering 1189 to 1198 has biased composition (basic and acidic residues); sequence PEEKEEKEKE. Acidic residues predominate over residues 1199-1232; sequence DSDEYDDLREEDVEPDLEELSLDDLDLDDFGDEH.

The protein belongs to the RNA polymerase beta chain family. As to quaternary structure, the RNAP catalytic core consists of 2 alpha, 1 beta, 1 beta' and 1 omega subunit. When a sigma factor is associated with the core the holoenzyme is formed, which can initiate transcription.

It catalyses the reaction RNA(n) + a ribonucleoside 5'-triphosphate = RNA(n+1) + diphosphate. Functionally, DNA-dependent RNA polymerase catalyzes the transcription of DNA into RNA using the four ribonucleoside triphosphates as substrates. This is DNA-directed RNA polymerase subunit beta from Clostridium botulinum (strain Kyoto / Type A2).